The following is a 578-amino-acid chain: Acyl-CoA synthetase ACTT5 (578 aa).

211 to 222 (RLTTSGTTGLPK) is an AMP binding site. Positions 472–551 (ELEAALLQAK…DEIPRSPTGK (80 aa)) are AMP-binding.

The protein belongs to the ATP-dependent AMP-binding enzyme family.

The protein operates within mycotoxin biosynthesis. In terms of biological role, acyl-CoA synthetase; part of the gene clusters that mediate the biosynthesis of the host-selective toxins (HSTs) ACT-toxins responsible for brown spot of tangerine disease by the tangerine pathotype which affects tangerines and mandarins. ACT-toxins consist of three moieties, 9,10-epoxy-8-hydroxy-9-methyl-decatrienoic acid (EDA), valine and a polyketide. ACT-toxin I is toxic to both citrus and pear; toxin II the 5''-deoxy derivative of ACT-toxin I, is highly toxic to pear and slightly toxic to citrus. On cellular level, ACT-toxins affect plasma membrane of susceptible cells and cause a sudden increase in loss of K(+) after a few minutes of toxin treatment. The acyl-CoA ligase ACTT1, the hydrolase ACTT2, the enoyl-CoA hydratases ACTT3 and ACTT6, and the acyl-CoA synthetase ACTT5 are all involved in the biosynthesis of the AK-, AF- and ACT-toxin common 9,10-epoxy-8-hydroxy-9-methyl-decatrienoic acid (EDA) structural moiety. The exact role of each enzyme, and of additional enzymes identified within the AF-toxin clusters have still to be determined. On the other hand, ACTTS1 to ACTTS4 are specific to the tangerine pathotype. The function of ACTTS3 is to elongate the polyketide chain portion of ACT-toxin that is unique to this toxin. The enoyl-reductase ACTTS2 might complement the missing enoyl-reductase (ER) domain in ACTTS3 in the synthesis of the polyketide portion of ACT-toxin. The roles of the nonribosomal peptide synthetases-related proteins ACTTS1 and ACTTS4 have also still not been elucidated. The chain is Acyl-CoA synthetase ACTT5 from Alternaria alternata (Alternaria rot fungus).